The following is a 200-amino-acid chain: UPF0488 protein CG14286 (200 aa).

Disordered stretches follow at residues 1 to 28 (MHKR…PVAE) and 139 to 174 (KDFR…AEAG).

It belongs to the UPF0488 family.

The polypeptide is UPF0488 protein CG14286 (Drosophila melanogaster (Fruit fly)).